Here is a 619-residue protein sequence, read N- to C-terminus: Guanylate cyclase soluble subunit beta-1 (619 aa).

A heme-binding site is contributed by H105. Positions 421-554 constitute a Guanylate cyclase domain; that stretch reads TILFSGIVGF…NTVNLTSRTE (134 aa).

It belongs to the adenylyl cyclase class-4/guanylyl cyclase family. As to quaternary structure, the active enzyme is formed by a heterodimer of an alpha and a beta subunit. Heterodimer with GUCY1A1. Can also form inactive homodimers in vitro. Heme is required as a cofactor. In terms of tissue distribution, lung and brain.

The protein resides in the cytoplasm. It catalyses the reaction GTP = 3',5'-cyclic GMP + diphosphate. Activated by nitric oxide in the presence of magnesium or manganese ions, binding of NO to the heme iron increases catalytic activity up to 400 folds. Mediates responses to nitric oxide (NO) by catalyzing the biosynthesis of the signaling molecule cGMP. This is Guanylate cyclase soluble subunit beta-1 (GUCY1B1) from Bos taurus (Bovine).